The primary structure comprises 549 residues: Mitogen-activated protein kinase 15 (549 aa).

A ubiquitin-conjugating region spans residues 1–20 (MCAAEVDRHVAQRYLIKRRL). The Protein kinase domain maps to 14-305 (YLIKRRLGKG…AEQALQHPYV (292 aa)). ATP is bound by residues 20 to 28 (LGKGAYGIV) and lysine 43. Aspartate 138 functions as the Proton acceptor in the catalytic mechanism. Threonine 176 carries the post-translational modification Phosphothreonine. A TXY motif is present at residues 176 to 178 (TEY). At tyrosine 178 the chain carries Phosphotyrosine. Residues 266 to 286 (LDALLPPDTPPEALDLLKRLL) are necessary to interact with ESRRA, to regulate its subcellular localization and to inhibit its transcriptional activity. The requires for interaction with GABARAP, MAP1LC3B AND GABARAPL1 stretch occupies residues 301 to 382 (QHPYVQRFHC…ARTQSLKSGV (82 aa)). The disordered stretch occupies residues 370–507 (ASPARTQSLK…PEPRPGRRMF (138 aa)). PXXXP motif repeat units follow at residues 380 to 384 (SGVLP) and 387 to 391 (PAETP). PXXXP motif; regulates binding with chromatin and interaction with PCNA repeat units follow at residues 395–399 (RGPKP) and 403–407 (PGHDP). A compositionally biased stretch (basic and acidic residues) spans 403–416 (PGHDPEHVEVRRQS). Arginine 451 is subject to Omega-N-methylarginine. A compositionally biased stretch (polar residues) spans 456–467 (SLTSQAEAQAAN). Low complexity predominate over residues 483 to 492 (AVGARRVPSR). Over residues 493-502 (LPREAPEPRP) the composition is skewed to basic and acidic residues.

The protein belongs to the protein kinase superfamily. CMGC Ser/Thr protein kinase family. MAP kinase subfamily. In terms of assembly, interacts with TGFB1I1. Interacts with CSK/c-Src, ABL1 and RET. Interacts with GABARAP, MAP1LC3B and GABARAPL1; controls, in a kinase-dependent fashion, both basal and starvation-induced autophagy. Interacts with ESRRA; promotes re-localization of ESRRA to the cytoplasm through a XPO1-dependent mechanism then inhibits ESRRA transcriptional activity. Interacts with PCNA; the interaction is chromatin binding- and kinase activity-dependent and prevents MDM2-mediated PCNA destruction by inhibiting the association of PCNA with MDM2. Interacts with DVL2. Interacts with CLIC3; MAPK15 does not phosphorylates CLIC3. In terms of processing, autophosphorylated on Thr-176 and Tyr-178; activates the enzyme. Post-translationally, ubiquitinated. Ubiquitination may allow its tight kinase activity regulation and rapid turnover. May be ubiquitinated by a SCF E3 ligase. As to expression, expressed at all stages of oocyte meiotic maturation.

It localises to the cytoplasm. Its subcellular location is the cytoskeleton. It is found in the cilium basal body. The protein localises to the cell junction. The protein resides in the tight junction. It localises to the microtubule organizing center. Its subcellular location is the centrosome. It is found in the centriole. The protein localises to the cytoplasmic vesicle. The protein resides in the autophagosome. It localises to the golgi apparatus. Its subcellular location is the nucleus. It is found in the spindle. The enzyme catalyses L-seryl-[protein] + ATP = O-phospho-L-seryl-[protein] + ADP + H(+). It catalyses the reaction L-threonyl-[protein] + ATP = O-phospho-L-threonyl-[protein] + ADP + H(+). With respect to regulation, activated by threonine and tyrosine phosphorylation. Inhibited by dual specificity phosphatases, such as DUSP1. Phosphorylation and activation in response to DNA damaging agents, serum stimulation. Constitutively activated when phosphorylated on Tyr-178. Activity depends on the relative rates of MAPK15 autophosphorylation and dephosphorylation by PTPN1. In terms of biological role, atypical MAPK protein that regulates several process such as autophagy, ciliogenesis, protein trafficking/secretion and genome integrity, in a kinase activity-dependent manner. Controls both, basal and starvation-induced autophagy throught its interaction with GABARAP, MAP1LC3B and GABARAPL1 leading to autophagosome formation, SQSTM1 degradation and reduced MAP1LC3B inhibitory phosphorylation. Regulates primary cilium formation and the localization of ciliary proteins involved in cilium structure, transport, and signaling. Prevents the relocation of the sugar-adding enzymes from the Golgi to the endoplasmic reticulum, thereby restricting the production of sugar-coated proteins. Upon amino-acid starvation, mediates transitional endoplasmic reticulum site disassembly and inhibition of secretion. Binds to chromatin leading to MAPK15 activation and interaction with PCNA, that which protects genomic integrity by inhibiting MDM2-mediated degradation of PCNA. Regulates DA transporter (DAT) activity and protein expression via activation of RhoA. In response to H(2)O(2) treatment phosphorylates ELAVL1, thus preventing it from binding to the PDCD4 3'UTR and rendering the PDCD4 mRNA accessible to miR-21 and leading to its degradation and loss of protein expression. Also functions in a kinase activity-independent manner as a negative regulator of growth. Phosphorylates in vitro FOS and MBP. During oocyte maturation, plays a key role in the microtubule organization and meiotic cell cycle progression in oocytes, fertilized eggs, and early embryos. Interacts with ESRRA promoting its re-localization from the nucleus to the cytoplasm and then prevents its transcriptional activity. The polypeptide is Mitogen-activated protein kinase 15 (Mus musculus (Mouse)).